We begin with the raw amino-acid sequence, 718 residues long: NF-kappa-B inhibitor zeta (718 aa).

Basic and acidic residues predominate over residues 1–17; that stretch reads MIVDKLLDDSRGGEGLR. 2 disordered regions span residues 1–20 and 58–108; these read MIVD…RDAA and SAPG…RQQR. Over residues 58 to 83 the composition is skewed to low complexity; the sequence is SAPGSPGSDSSDFSSASSVSSCGAVE. Over residues 84–97 the composition is skewed to basic and acidic residues; the sequence is SRSRGGARAERQPV. The region spanning 108 to 130 is the OCA domain; it reads RGPFQGVRVKNSVKELLLHIRSH. Positions 164 to 179 match the Nuclear localization signal motif; the sequence is KRKGPDSLSDGPACKR. The tract at residues 186–211 is disordered; that stretch reads QFLTPPQTPTPGESMEDVHLNEPKQE. The span at 201–211 shows a compositional bias: basic and acidic residues; it reads EDVHLNEPKQE. The required for transcriptional activity stretch occupies residues 321–394; the sequence is AYEPNLFDGP…MVGHEMASDS (74 aa). The interval 404–718 is interaction with NFKB1/p50; it reads MGNPMNTTQL…KSIQQRAPPY (315 aa). 7 ANK repeats span residues 443-472, 479-508, 512-541, 551-580, 582-607, 612-641, and 648-681; these read DGDT…ALHM, NGQS…QVNT, WGRT…GSNQ, DGLT…HSPE, QELL…AVEA, SGRT…CLSF, and NGNT…DPST.

As to quaternary structure, interacts with NFKB1/p50. Interacts with RELA. Interacts with AKIRIN2. In terms of tissue distribution, expressed at high levels in peripheral blood leukocytes and lung, at moderate levels in liver, placenta, and at low levels in spleen, kidney, skeletal muscle and heart.

The protein localises to the nucleus. Functionally, involved in regulation of NF-kappa-B transcription factor complexes. Inhibits NF-kappa-B activity without affecting its nuclear translocation upon stimulation. Inhibits DNA-binding of RELA and NFKB1/p50, and of the NF-kappa-B p65-p50 heterodimer and the NF-kappa-B p50-p50 homodimer. Also seems to activate NF-kappa-B-mediated transcription. In vitro, upon association with NFKB1/p50 has transcriptional activation activity and, together with NFKB1/p50 and RELA, is recruited to LCN2 promoters. Promotes transcription of LCN2 and DEFB4. Is recruited to IL-6 promoters and activates IL-6 but decreases TNF-alpha production in response to LPS. Seems to be involved in the induction of inflammatory genes activated through TLR/IL-1 receptor signaling. Involved in the induction of T helper 17 cells (Th17) differentiation upon recognition of antigen by T cell antigen receptor (TCR). The sequence is that of NF-kappa-B inhibitor zeta (NFKBIZ) from Homo sapiens (Human).